The following is a 327-amino-acid chain: Probable pectinesterase A (327 aa).

A signal peptide spans 1–19; that stretch reads MHTPYLLGALAALAATAVG. Asn-84 is a glycosylation site (N-linked (GlcNAc...) asparagine). Gln-145 contributes to the substrate binding site. Catalysis depends on Asp-168, which acts as the Proton donor. Asp-189 acts as the Nucleophile in catalysis. Residues Arg-249 and Trp-251 each contribute to the substrate site. Asn-288 carries an N-linked (GlcNAc...) asparagine glycan.

It belongs to the pectinesterase family.

The protein resides in the secreted. The enzyme catalyses [(1-&gt;4)-alpha-D-galacturonosyl methyl ester](n) + n H2O = [(1-&gt;4)-alpha-D-galacturonosyl](n) + n methanol + n H(+). The protein operates within glycan metabolism; pectin degradation; 2-dehydro-3-deoxy-D-gluconate from pectin: step 1/5. Functionally, involved in maceration and soft-rotting of plant tissue. The chain is Probable pectinesterase A (pmeA) from Aspergillus niger (strain ATCC MYA-4892 / CBS 513.88 / FGSC A1513).